We begin with the raw amino-acid sequence, 250 residues long: Manganese transport system ATP-binding protein MntB (250 aa).

An ABC transporter domain is found at 4–236; it reads VELDNVTVAY…NLQKTYGGRL (233 aa). 36–43 lines the ATP pocket; the sequence is GPNGAGKS.

Belongs to the ABC transporter superfamily. As to quaternary structure, the complex is probably composed of two ATP-binding proteins (MntB), two transmembrane proteins (MntC and MntD) and a solute-binding protein (MntA).

It localises to the cell membrane. In terms of biological role, probably part of the ABC transporter complex MntABCD involved in manganese import. Probably responsible for energy coupling to the transport system. The chain is Manganese transport system ATP-binding protein MntB from Bacillus subtilis (strain 168).